Here is a 65-residue protein sequence, read N- to C-terminus: Small ribosomal subunit protein eS27 (65 aa).

4 residues coordinate Zn(2+): C21, C24, C40, and C43. The C4-type zinc-finger motif lies at 21 to 43 (CRDCGNVQVVFARPSSTVTCNIC).

This sequence belongs to the eukaryotic ribosomal protein eS27 family. In terms of assembly, part of the 30S ribosomal subunit. Zn(2+) is required as a cofactor.

The sequence is that of Small ribosomal subunit protein eS27 from Thermoplasma acidophilum (strain ATCC 25905 / DSM 1728 / JCM 9062 / NBRC 15155 / AMRC-C165).